A 322-amino-acid chain; its full sequence is Breast cancer metastasis-suppressor 1-like protein (322 aa).

Over residues 1–16 (MPVHSREKKESNHNDM) the composition is skewed to basic and acidic residues. Positions 1–56 (MPVHSREKKESNHNDMEVDYPENEGTSSEEDDSDSSSGSEEGDSSEMDDEDCERRR) are disordered. Positions 17–51 (EVDYPENEGTSSEEDDSDSSSGSEEGDSSEMDDED) are enriched in acidic residues. 2 coiled-coil regions span residues 50–82 (EDCE…KERL) and 147–178 (EKLL…ITSE).

It belongs to the BRMS1 family.

It localises to the nucleus. Involved in the histone deacetylase (HDAC1)-dependent transcriptional repression activity. The protein is Breast cancer metastasis-suppressor 1-like protein (brms1l) of Xenopus tropicalis (Western clawed frog).